The sequence spans 1023 residues: Probable histidine kinase 3 (1023 aa).

The Cytoplasmic segment spans residues 1-80; sequence MDEMSCGGGG…RGWRVVRETW (80 aa). The helical transmembrane segment at 81–101 threads the bilayer; sequence WWVLLLWILAGSLGSFYLFLF. Residues 102–387 are Extracellular-facing; it reads MNAQSLDKRR…CRFEKKPPWP (286 aa). Residues 151-352 enclose the CHASE domain; it reads TPSAIDQMTF…TNESPISMYG (202 aa). A helical transmembrane segment spans residues 388 to 408; sequence WLAITSSFGTLVIALLTGHIF. The Cytoplasmic segment spans residues 409-1023; sequence QATVHRIAKV…RFFQNHDQVE (615 aa). The region spanning 445–715 is the Histidine kinase domain; that stretch reads TVSHEIRTPM…TFTFTAVLMR (271 aa). Position 448 is a phosphohistidine; by autocatalysis (histidine 448). Response regulatory domains follow at residues 732-854 and 880-1016; these read NALV…RRAL and QIIV…ARFF. The residue at position 783 (aspartate 783) is a 4-aspartylphosphate. The disordered stretch occupies residues 812 to 831; it reads LFLLGSSASSPKGGSDTSRE. Polar residues predominate over residues 817–827; it reads SSASSPKGGSD. At aspartate 930 the chain carries 4-aspartylphosphate.

Activation probably requires a transfer of a phosphate group between a His in the transmitter domain and an Asp of the receiver domain.

It localises to the cell membrane. It catalyses the reaction ATP + protein L-histidine = ADP + protein N-phospho-L-histidine.. Cytokinin receptor related to bacterial two-component regulators. Functions as a histidine kinase and transmits the stress signal to a downstream MAPK cascade. This chain is Probable histidine kinase 3, found in Oryza sativa subsp. indica (Rice).